A 266-amino-acid polypeptide reads, in one-letter code: Glutaconate CoA-transferase subunit B (266 aa).

Glutamate 54 is a catalytic residue.

The protein belongs to the 3-oxoacid CoA-transferase subunit B family. As to quaternary structure, heterooctamer of four A and four B subunits.

It localises to the cytoplasm. It catalyses the reaction trans-glutaconate + acetyl-CoA = (2E)-glutaconyl-CoA + acetate. The protein operates within amino-acid degradation; L-glutamate degradation via hydroxyglutarate pathway; crotonoyl-CoA from L-glutamate: step 3/5. In terms of biological role, catalyzes the transfer of the CoA moiety from acetyl-CoA to (R)-2-hydroxyglutarate and related compounds like glutaconate. This is Glutaconate CoA-transferase subunit B (gctB) from Acidaminococcus fermentans (strain ATCC 25085 / DSM 20731 / CCUG 9996 / CIP 106432 / VR4).